The chain runs to 566 residues: Urease subunit beta (566 aa).

Residues 129–566 (GGIDTHIHFI…VPMARRYFMF (438 aa)) enclose the Urease domain. The Ni(2+) site is built by His134, His136, and Lys217. An N6-carboxylysine modification is found at Lys217. Substrate is bound at residue His219. Ni(2+) is bound by residues His246 and His272. His320 functions as the Proton donor in the catalytic mechanism. Asp360 contacts Ni(2+).

It belongs to the metallo-dependent hydrolases superfamily. Urease alpha subunit family. In terms of assembly, heterohexamer of 3 UreA (alpha) and 3 UreB (beta) subunits. Ni cation is required as a cofactor. Carboxylation allows a single lysine to coordinate two nickel ions.

It is found in the cytoplasm. The enzyme catalyses urea + 2 H2O + H(+) = hydrogencarbonate + 2 NH4(+). The protein operates within nitrogen metabolism; urea degradation; CO(2) and NH(3) from urea (urease route): step 1/1. The sequence is that of Urease subunit beta from Aliarcobacter butzleri (strain RM4018) (Arcobacter butzleri).